A 235-amino-acid chain; its full sequence is tRNA (guanine-N(7)-)-methyltransferase (235 aa).

S-adenosyl-L-methionine-binding positions include glycine 60, 83–84 (EI), 116–117 (NA), and leucine 136. The active site involves aspartate 139. 214-216 (SEE) lines the S-adenosyl-L-methionine pocket.

The protein belongs to the class I-like SAM-binding methyltransferase superfamily. TrmB family.

It is found in the nucleus. It carries out the reaction guanosine(46) in tRNA + S-adenosyl-L-methionine = N(7)-methylguanosine(46) in tRNA + S-adenosyl-L-homocysteine. The protein operates within tRNA modification; N(7)-methylguanine-tRNA biosynthesis. Functionally, catalyzes the formation of N(7)-methylguanine at position 46 (m7G46) in tRNA. The protein is tRNA (guanine-N(7)-)-methyltransferase of Anopheles gambiae (African malaria mosquito).